Here is a 400-residue protein sequence, read N- to C-terminus: Elongation factor Tu (400 aa).

The tr-type G domain occupies 10 to 209 (KPHVNIGTIG…AVDKYIPTPQ (200 aa)). Residues 19 to 26 (GHVDHGKT) are G1. Residue 19 to 26 (GHVDHGKT) coordinates GTP. Threonine 26 is a Mg(2+) binding site. Residues 60–64 (GITIN) form a G2 region. A G3 region spans residues 81–84 (DCPG). Residues 81–85 (DCPGH) and 136–139 (NKVD) each bind GTP. The segment at 136-139 (NKVD) is G4. Positions 174–176 (SAL) are G5.

Belongs to the TRAFAC class translation factor GTPase superfamily. Classic translation factor GTPase family. EF-Tu/EF-1A subfamily. Monomer.

It localises to the cytoplasm. The enzyme catalyses GTP + H2O = GDP + phosphate + H(+). In terms of biological role, GTP hydrolase that promotes the GTP-dependent binding of aminoacyl-tRNA to the A-site of ribosomes during protein biosynthesis. This chain is Elongation factor Tu, found in Caldicellulosiruptor bescii (strain ATCC BAA-1888 / DSM 6725 / KCTC 15123 / Z-1320) (Anaerocellum thermophilum).